Consider the following 450-residue polypeptide: MGKLDKASKLIDEENKYYARSARINYYNLVIDHAHGATLVDVDGNKYIDLLASASAINVGHTHEKVVKAIADQAQKLIHYTPAYFHHVPGMELSEKLAKIAPGNSPKMVSFGNSGSDANDAIIKFARAYTGRQYIVSYMGSYHGSTYGSQTLSGSSLNMTRKIGPMLPSVVHVPYPDSYRTYPGETEHDVSLRYFNEFKKPFESFLPADETACVLIEPIQGDGGIIKAPEEYMQLVYKFCHEHGILFAIDEVNQGLGRTGKMWAIQQFKDIEPDLMSVGKSLASGMPLSAVIGKKEVMQSLDAPAHLFTTAGNPVCSAASLATLDVIEYEGLVEKSATDGAYAKQRFLEMQQRHPMIGDVRMWGLNGGIELVKDPKTKEPDSDAATKVIYYAFAHGVVIITLAGNILRFQPPLVIPREQLDQALQVLDDAFTAVENGEVTIPKDTGKIGW.

Pyridoxal 5'-phosphate-binding positions include 115 to 116 (GS), Y142, and 250 to 253 (DEVN). K280 bears the N6-(pyridoxal phosphate)lysine mark. Residue T309 coordinates pyridoxal 5'-phosphate.

This sequence belongs to the class-III pyridoxal-phosphate-dependent aminotransferase family. Homotetramer. Pyridoxal 5'-phosphate serves as cofactor.

The catalysed reaction is L-isoleucine = D-allo-isoleucine. Its function is as follows. Catalyzes the epimerization of L-isoleucine to D-allo-isoleucine and D-allo-isoleucine to L-isoleucine. Can also catalyze the racemization of many nonpolar amino acids, including leucine and valine. Does not have GABA aminotransferase activity. The polypeptide is Isoleucine 2-epimerase (Lentilactobacillus buchneri (Lactobacillus buchneri)).